A 91-amino-acid chain; its full sequence is Probable Fe(2+)-trafficking protein (91 aa).

Belongs to the Fe(2+)-trafficking protein family.

Could be a mediator in iron transactions between iron acquisition and iron-requiring processes, such as synthesis and/or repair of Fe-S clusters in biosynthetic enzymes. In Burkholderia thailandensis (strain ATCC 700388 / DSM 13276 / CCUG 48851 / CIP 106301 / E264), this protein is Probable Fe(2+)-trafficking protein.